We begin with the raw amino-acid sequence, 161 residues long: Nucleotide-binding protein Sfri_0732 (161 aa).

It belongs to the YajQ family.

Functionally, nucleotide-binding protein. This chain is Nucleotide-binding protein Sfri_0732, found in Shewanella frigidimarina (strain NCIMB 400).